Reading from the N-terminus, the 290-residue chain is Ribosomal RNA small subunit methyltransferase A (290 aa).

S-adenosyl-L-methionine-binding residues include asparagine 27, leucine 29, glycine 54, glutamate 75, aspartate 100, and asparagine 125.

Belongs to the class I-like SAM-binding methyltransferase superfamily. rRNA adenine N(6)-methyltransferase family. RsmA subfamily.

It is found in the cytoplasm. It catalyses the reaction adenosine(1518)/adenosine(1519) in 16S rRNA + 4 S-adenosyl-L-methionine = N(6)-dimethyladenosine(1518)/N(6)-dimethyladenosine(1519) in 16S rRNA + 4 S-adenosyl-L-homocysteine + 4 H(+). In terms of biological role, specifically dimethylates two adjacent adenosines (A1518 and A1519) in the loop of a conserved hairpin near the 3'-end of 16S rRNA in the 30S particle. May play a critical role in biogenesis of 30S subunits. The sequence is that of Ribosomal RNA small subunit methyltransferase A from Streptococcus gordonii (strain Challis / ATCC 35105 / BCRC 15272 / CH1 / DL1 / V288).